Reading from the N-terminus, the 400-residue chain is Axin-like protein 1 (400 aa).

An RGS domain is found at 4–132; the sequence is RSKFSIDRVL…TTTADVNTTW (129 aa). 2 disordered regions span residues 190 to 233 and 278 to 306; these read QETK…TLKV and GTLE…GSEA. Over residues 194–210 the composition is skewed to basic and acidic residues; it reads NSSETEEHAESPRKEKS. A compositionally biased stretch (polar residues) spans 287-298; the sequence is FTGTNNGFSTLQ. The 88-residue stretch at 305–392 folds into the DIX domain; that stretch reads EAPKMTVELR…RITAICRMCP (88 aa).

As to quaternary structure, interacts with bar-1, dsh-2, gsk-3, and mig-5.

Works in parallel with pry-1 in negatively regulating bar-1 signaling in vulval precursor cells and Q neuroblasts. Shown to have a role in excretory cell development. This is Axin-like protein 1 from Caenorhabditis elegans.